We begin with the raw amino-acid sequence, 378 residues long: Beta sliding clamp (378 aa).

This sequence belongs to the beta sliding clamp family. Forms a ring-shaped head-to-tail homodimer around DNA which binds and tethers DNA polymerases and other proteins to the DNA. The DNA replisome complex has a single clamp-loading complex (3 tau and 1 each of delta, delta', psi and chi subunits) which binds 3 Pol III cores (1 core on the leading strand and 2 on the lagging strand) each with a beta sliding clamp dimer. Additional proteins in the replisome are other copies of gamma, psi and chi, Ssb, DNA helicase and RNA primase.

It localises to the cytoplasm. Its function is as follows. Confers DNA tethering and processivity to DNA polymerases and other proteins. Acts as a clamp, forming a ring around DNA (a reaction catalyzed by the clamp-loading complex) which diffuses in an ATP-independent manner freely and bidirectionally along dsDNA. Initially characterized for its ability to contact the catalytic subunit of DNA polymerase III (Pol III), a complex, multichain enzyme responsible for most of the replicative synthesis in bacteria; Pol III exhibits 3'-5' exonuclease proofreading activity. The beta chain is required for initiation of replication as well as for processivity of DNA replication. This Streptococcus pneumoniae (strain ATCC BAA-255 / R6) protein is Beta sliding clamp (dnaN).